A 185-amino-acid polypeptide reads, in one-letter code: Protein GrpE (185 aa).

The segment covering 1–20 (MSQEKKEELQSEAQVTKEET) has biased composition (basic and acidic residues). Positions 1-28 (MSQEKKEELQSEAQVTKEETPQANEAAA) are disordered.

Belongs to the GrpE family. As to quaternary structure, homodimer.

It is found in the cytoplasm. Its function is as follows. Participates actively in the response to hyperosmotic and heat shock by preventing the aggregation of stress-denatured proteins, in association with DnaK and GrpE. It is the nucleotide exchange factor for DnaK and may function as a thermosensor. Unfolded proteins bind initially to DnaJ; upon interaction with the DnaJ-bound protein, DnaK hydrolyzes its bound ATP, resulting in the formation of a stable complex. GrpE releases ADP from DnaK; ATP binding to DnaK triggers the release of the substrate protein, thus completing the reaction cycle. Several rounds of ATP-dependent interactions between DnaJ, DnaK and GrpE are required for fully efficient folding. This Sulfurimonas denitrificans (strain ATCC 33889 / DSM 1251) (Thiomicrospira denitrificans (strain ATCC 33889 / DSM 1251)) protein is Protein GrpE.